We begin with the raw amino-acid sequence, 217 residues long: 3,4-dihydroxy-2-butanone 4-phosphate synthase (217 aa).

D-ribulose 5-phosphate contacts are provided by residues Arg37 to Glu38, Asp42, Arg150 to Thr154, and Glu174. Residue Glu38 participates in Mg(2+) binding. His153 is a binding site for Mg(2+).

Belongs to the DHBP synthase family. As to quaternary structure, homodimer. Requires Mg(2+) as cofactor. Mn(2+) serves as cofactor.

The catalysed reaction is D-ribulose 5-phosphate = (2S)-2-hydroxy-3-oxobutyl phosphate + formate + H(+). Its pathway is cofactor biosynthesis; riboflavin biosynthesis; 2-hydroxy-3-oxobutyl phosphate from D-ribulose 5-phosphate: step 1/1. Catalyzes the conversion of D-ribulose 5-phosphate to formate and 3,4-dihydroxy-2-butanone 4-phosphate. This is 3,4-dihydroxy-2-butanone 4-phosphate synthase from Salmonella paratyphi A (strain ATCC 9150 / SARB42).